A 371-amino-acid chain; its full sequence is Anhydro-N-acetylmuramic acid kinase (371 aa).

Position 9–16 (9–16) interacts with ATP; that stretch reads GTSMDGID.

The protein belongs to the anhydro-N-acetylmuramic acid kinase family.

The enzyme catalyses 1,6-anhydro-N-acetyl-beta-muramate + ATP + H2O = N-acetyl-D-muramate 6-phosphate + ADP + H(+). The protein operates within amino-sugar metabolism; 1,6-anhydro-N-acetylmuramate degradation. Its pathway is cell wall biogenesis; peptidoglycan recycling. Its function is as follows. Catalyzes the specific phosphorylation of 1,6-anhydro-N-acetylmuramic acid (anhMurNAc) with the simultaneous cleavage of the 1,6-anhydro ring, generating MurNAc-6-P. Is required for the utilization of anhMurNAc either imported from the medium or derived from its own cell wall murein, and thus plays a role in cell wall recycling. In Azorhizobium caulinodans (strain ATCC 43989 / DSM 5975 / JCM 20966 / LMG 6465 / NBRC 14845 / NCIMB 13405 / ORS 571), this protein is Anhydro-N-acetylmuramic acid kinase.